The chain runs to 393 residues: Beta-ureidopropionase (393 aa).

One can recognise a CN hydrolase domain in the interval 72 to 344; sequence VRVGLVQNRI…DGLLVTELNL (273 aa). The active-site Proton acceptor is E119. The Proton donor role is filled by K196. C233 acts as the Nucleophile in catalysis. A Phosphoserine modification is found at S378.

The protein belongs to the carbon-nitrogen hydrolase superfamily. BUP family. Homodimer, homotetramer, homooctamer; can also form higher homooligomers. Post-translationally, the N-terminus is blocked. As to expression, detected in liver (at protein level).

It localises to the cytoplasm. It catalyses the reaction 3-(carbamoylamino)propanoate + H2O + 2 H(+) = beta-alanine + NH4(+) + CO2. The enzyme catalyses 3-(carbamoylamino)-2-methylpropanoate + H2O + 2 H(+) = (R)-3-amino-2-methylpropanoate + NH4(+) + CO2. The protein operates within amino-acid biosynthesis; beta-alanine biosynthesis. Allosteric enzyme with positive cooperativity toward the substrate N-carbamoyl-beta-alanine at low substrate concentrations (below 12 nM). Displays no cooperativity at substrate levels above 12 nM. Its function is as follows. Catalyzes a late step in pyrimidine degradation. Converts N-carbamoyl-beta-alanine (3-ureidopropanoate) into beta-alanine, ammonia and carbon dioxide. Likewise, converts N-carbamoyl-beta-aminoisobutyrate (3-ureidoisobutyrate) into beta-aminoisobutyrate, ammonia and carbon dioxide. The sequence is that of Beta-ureidopropionase (Upb1) from Rattus norvegicus (Rat).